The sequence spans 101 residues: Toxin Tpa8 (101 aa).

Positions 1–20 (MVKSEMKLVIFSLFLLLIGV) are cleaved as a signal peptide. The LCN-type CS-alpha/beta domain maps to 24-98 (KNGYPVIEGG…VMDRTKEYCE (75 aa)). Disulfide bonds link Cys-44/Cys-70, Cys-56/Cys-75, Cys-60/Cys-77, and Cys-71/Cys-97.

The protein belongs to the long (4 C-C) scorpion toxin superfamily. Sodium channel inhibitor family. Beta subfamily. Expressed by the venom gland.

It localises to the secreted. Its function is as follows. Excitatory insect beta-toxins induce a spastic paralysis. They bind voltage-independently at site-4 of sodium channels (Nav) and shift the voltage of activation toward more negative potentials thereby affecting sodium channel activation and promoting spontaneous and repetitive firing. The sequence is that of Toxin Tpa8 from Tityus pachyurus (Colombian scorpion).